A 181-amino-acid chain; its full sequence is Probable pyruvoyl-dependent arginine decarboxylase (181 aa).

The residue at position 43 (Ser-43) is a Pyruvic acid (Ser).

The protein belongs to the PdaD family. Pyruvate serves as cofactor.

The catalysed reaction is L-arginine + H(+) = agmatine + CO2. This is Probable pyruvoyl-dependent arginine decarboxylase from Chlorobium phaeovibrioides (strain DSM 265 / 1930) (Prosthecochloris vibrioformis (strain DSM 265)).